We begin with the raw amino-acid sequence, 170 residues long: Ribosome maturation factor RimM (170 aa).

A PRC barrel domain is found at Asn97 to Phe170.

This sequence belongs to the RimM family. As to quaternary structure, binds ribosomal protein uS19.

The protein resides in the cytoplasm. Functionally, an accessory protein needed during the final step in the assembly of 30S ribosomal subunit, possibly for assembly of the head region. Essential for efficient processing of 16S rRNA. May be needed both before and after RbfA during the maturation of 16S rRNA. It has affinity for free ribosomal 30S subunits but not for 70S ribosomes. In Stenotrophomonas maltophilia (strain R551-3), this protein is Ribosome maturation factor RimM.